The chain runs to 349 residues: tRNA pseudouridine synthase D (349 aa).

Phe27 lines the substrate pocket. The Nucleophile role is filled by Asp80. Position 129 (Asn129) interacts with substrate. In terms of domain architecture, TRUD spans 155–303; sequence GVPNYFGAQR…VEAARRAMLL (149 aa). Phe329 lines the substrate pocket.

The protein belongs to the pseudouridine synthase TruD family.

The catalysed reaction is uridine(13) in tRNA = pseudouridine(13) in tRNA. Its function is as follows. Responsible for synthesis of pseudouridine from uracil-13 in transfer RNAs. The chain is tRNA pseudouridine synthase D from Escherichia coli O81 (strain ED1a).